Reading from the N-terminus, the 369-residue chain is Tyrosyl-DNA phosphodiesterase 2 (369 aa).

The interval 58–77 (EKTEVTGNKRKDDTAEASGT) is disordered. Residues 59–71 (KTEVTGNKRKDDT) show a composition bias toward basic and acidic residues. Residues 129 to 133 (NVDGL) are interaction with 5' end of substrate DNA. Residues Asp-131 and Glu-161 each contribute to the Mg(2+) site. Residues 235–240 (HLESCK) are interaction with 5' end of substrate DNA. The active-site Proton donor/acceptor is the Asp-271. Positions 273-275 (NLR) are interaction with 5' end of substrate DNA.

Belongs to the CCR4/nocturin family. TTRAP/TDP2 subfamily. It depends on Mg(2+) as a cofactor. Mn(2+) serves as cofactor. In terms of tissue distribution, expressed ubiquitously during blastula stages and throughout gastrulation. Shortly after shield formation, expressed weakly in dorsal forerunner cells (DFCs). Between somite stages 5 and 9, expressed in the tailbud and around the Kupffer's vesicle at a higher level than the more uniform expression in the embryo.

It is found in the nucleus. The protein localises to the PML body. Functionally, DNA repair enzyme that can remove a variety of covalent adducts from DNA through hydrolysis of a 5'-phosphodiester bond, giving rise to DNA with a free 5' phosphate. Catalyzes the hydrolysis of dead-end complexes between DNA and the topoisomerase 2 (top2) active site tyrosine residue. Hydrolyzes 5'-phosphoglycolates on protruding 5' ends on DNA double-strand breaks (DSBs) due to DNA damage by radiation and free radicals. Controls gastrulation movements and left/right (L/R) axis determination via smad3-mediated regulation of cdh1/e-cadherin. Regulates the formation of Kupffer's vesicle, a signaling center essential for establishing L/R asymmetry. Modulates smad3 activity through modulating nodal-acvr1/akt4 signaling. In Danio rerio (Zebrafish), this protein is Tyrosyl-DNA phosphodiesterase 2 (tdp2).